Consider the following 398-residue polypeptide: Acetate kinase (398 aa).

N8 lines the Mg(2+) pocket. K15 serves as a coordination point for ATP. Substrate is bound at residue R89. D146 serves as the catalytic Proton donor/acceptor. ATP is bound by residues 206-210, 283-285, and 331-335; these read HIGNG, DMR, and GMGEN. E383 provides a ligand contact to Mg(2+).

Belongs to the acetokinase family. Homodimer. Requires Mg(2+) as cofactor. Mn(2+) serves as cofactor.

It localises to the cytoplasm. It catalyses the reaction acetate + ATP = acetyl phosphate + ADP. It functions in the pathway metabolic intermediate biosynthesis; acetyl-CoA biosynthesis; acetyl-CoA from acetate: step 1/2. In terms of biological role, catalyzes the formation of acetyl phosphate from acetate and ATP. Can also catalyze the reverse reaction. The sequence is that of Acetate kinase from Streptococcus pyogenes serotype M12 (strain MGAS2096).